A 187-amino-acid polypeptide reads, in one-letter code: UPF0301 protein Cpha266_0885 (187 aa).

This sequence belongs to the UPF0301 (AlgH) family.

This Chlorobium phaeobacteroides (strain DSM 266 / SMG 266 / 2430) protein is UPF0301 protein Cpha266_0885.